The sequence spans 773 residues: Probable serine/threonine-protein kinase MARK-C (773 aa).

Residues 1–27 are compositionally biased toward polar residues; that stretch reads MESNKSSSHGDVSTSPSFLNNHHQFNN. The interval 1–32 is disordered; it reads MESNKSSSHGDVSTSPSFLNNHHQFNNGGDII. One can recognise a Protein kinase domain in the interval 46 to 300; it reads YEVGKTLGNG…IQELKNHPWT (255 aa). Residues 52–60 and Lys75 each bind ATP; that span reads LGNGTFGKV. The active-site Proton acceptor is the Asp171. Residues 362–390 adopt a coiled-coil conformation; sequence RYASKEVENLKSKLELLSKRKKSFSDKRN. Disordered stretches follow at residues 382–445, 462–487, and 558–588; these read KKSF…SQGS, DNDI…NKDI, and YSIQ…TNLR. The span at 405–443 shows a compositional bias: low complexity; sequence DLSSNNNNNQQQQNSPPSKTNSSSTSSSNRESNNNSPSQ. A coiled-coil region spans residues 445–474; the sequence is SIKEISLDELDNHIEQLDNDIENSDNNKSS. Residues 468 to 478 are compositionally biased toward polar residues; sequence SDNNKSSSLTR. Residues 561–573 show a composition bias toward low complexity; that stretch reads QQQQLQQQQQQQQ. Residues 724–773 enclose the KA1 domain; that stretch reads CFDEDNSVKFQIEIVKICNLDLTGIQLKRLSGDTWKYKDICTELVESMKL.

The protein belongs to the protein kinase superfamily. CAMK Ser/Thr protein kinase family. SNF1 subfamily.

The catalysed reaction is L-seryl-[protein] + ATP = O-phospho-L-seryl-[protein] + ADP + H(+). It catalyses the reaction L-threonyl-[protein] + ATP = O-phospho-L-threonyl-[protein] + ADP + H(+). In Dictyostelium discoideum (Social amoeba), this protein is Probable serine/threonine-protein kinase MARK-C (mrkC).